The primary structure comprises 794 residues: Protein SEY1 (794 aa).

Over 1 to 687 the chain is Cytoplasmic; sequence MMEVIDSVLG…KRSIIKTTTA (687 aa). The 230-residue stretch at 43 to 272 folds into the GB1/RHD3-type G domain; that stretch reads GLDYHVISVF…ANPYYFKPQY (230 aa). 53-60 contacts GTP; it reads GSQSSGKS. The stretch at 331 to 352 forms a coiled coil; sequence VDHILDDREKLGEVLKNLKQEC. Residues 688–708 form a helical membrane-spanning segment; sequence IPIWMYLLVVALGWNEFVMVL. At 709–711 the chain is on the lumenal side; that stretch reads RNP. The chain crosses the membrane as a helical span at residues 712–732; it reads LLVTLVLLFGVGFIFVNKFGL. The Cytoplasmic segment spans residues 733–794; it reads WGPVLNVAHN…SDNEKIEKSE (62 aa). Residues 770-794 form a disordered region; that stretch reads NSAGKESYEMKDMSDSDNEKIEKSE. Residues 775–794 are compositionally biased toward basic and acidic residues; the sequence is ESYEMKDMSDSDNEKIEKSE.

The protein belongs to the TRAFAC class dynamin-like GTPase superfamily. GB1/RHD3 GTPase family. RHD3 subfamily.

The protein localises to the endoplasmic reticulum membrane. Cooperates with the reticulon proteins and tubule-shaping DP1 family proteins to generate and maintain the structure of the tubular endoplasmic reticulum network. Has GTPase activity, which is required for its function in ER organization. The sequence is that of Protein SEY1 from Zygosaccharomyces rouxii (strain ATCC 2623 / CBS 732 / NBRC 1130 / NCYC 568 / NRRL Y-229).